The primary structure comprises 70 residues: Mu-conotoxin-like Am3.4 (70 aa).

The signal sequence occupies residues 1–20 (MMYKLGVLLIICLLLFPLTA). Positions 21-53 (VPQDGDQPADRPAERMQDDISFEHDRFFDPVKR) are excised as a propeptide. Intrachain disulfides connect Cys54-Cys69, Cys55-Cys65, and Cys61-Cys68. The residue at position 67 (Pro67) is a 4-hydroxyproline; partial; in major form. Cys69 is modified (cysteine amide).

It belongs to the conotoxin M superfamily. Contains 3 disulfide bonds. In terms of tissue distribution, expressed by the venom duct.

It is found in the secreted. Mu-conotoxins block voltage-gated sodium channels (Nav). This is Mu-conotoxin-like Am3.4 from Conus amadis (Amadis cone).